Reading from the N-terminus, the 709-residue chain is Disintegrin and metalloproteinase domain-containing protein 5 (709 aa).

Positions 1-98 (MKTPISSILK…TLSGFIHVIY (98 aa)) are excised as a propeptide. Topologically, residues 1–649 (MKTPISSILK…QQNRGIHPKQ (649 aa)) are extracellular. Residues 141-334 (RYIKTDIVVD…QDLECLQDLP (194 aa)) enclose the Peptidase M12B domain. Intrachain disulfides connect Cys247/Cys329, Cys289/Cys314, Cys291/Cys296, Cys406/Cys426, Cys585/Cys597, Cys591/Cys603, and Cys605/Cys614. The Disintegrin domain occupies 346 to 434 (RRICGNGILE…YCVPDTFARN (89 aa)). In terms of domain architecture, EGF-like; calcium-binding spans 581-615 (DFQQCNTSRDCNDHGVCNNFNHCHCDKGYNPPYCE). The helical transmembrane segment at 650–670 (QLQLILYITLPLIMIISAVFI) threads the bilayer. Residues 671-709 (KQSKLSRLCGRERSEGTSCITEDSVSNTKMTTNEGSTLH) lie on the Cytoplasmic side of the membrane. Residues 690–709 (ITEDSVSNTKMTTNEGSTLH) form a disordered region.

Interacts with TEX101. In terms of tissue distribution, detected in testis.

Its subcellular location is the membrane. This is a non catalytic metalloprotease-like protein. May play a role in sperm-egg fusion. This is Disintegrin and metalloproteinase domain-containing protein 5 (Adam5) from Rattus norvegicus (Rat).